A 375-amino-acid polypeptide reads, in one-letter code: Histidine biosynthesis bifunctional protein HisB (375 aa).

The histidinol-phosphatase stretch occupies residues 1-168 (MTPILFVDRD…GIAHELADAP (168 aa)). The active-site Nucleophile is aspartate 8. Mg(2+)-binding residues include aspartate 8, aspartate 10, and aspartate 128. Residue aspartate 10 is the Proton donor of the active site. The imidazoleglycerol-phosphate dehydratase stretch occupies residues 169–375 (RRAVVQRNTK…TALPTTKGAL (207 aa)).

It in the N-terminal section; belongs to the histidinol-phosphatase family. The protein in the C-terminal section; belongs to the imidazoleglycerol-phosphate dehydratase family. Mg(2+) serves as cofactor.

It localises to the cytoplasm. The enzyme catalyses D-erythro-1-(imidazol-4-yl)glycerol 3-phosphate = 3-(imidazol-4-yl)-2-oxopropyl phosphate + H2O. It carries out the reaction L-histidinol phosphate + H2O = L-histidinol + phosphate. Its pathway is amino-acid biosynthesis; L-histidine biosynthesis; L-histidine from 5-phospho-alpha-D-ribose 1-diphosphate: step 6/9. It participates in amino-acid biosynthesis; L-histidine biosynthesis; L-histidine from 5-phospho-alpha-D-ribose 1-diphosphate: step 8/9. In Xanthomonas euvesicatoria pv. vesicatoria (strain 85-10) (Xanthomonas campestris pv. vesicatoria), this protein is Histidine biosynthesis bifunctional protein HisB.